Here is a 337-residue protein sequence, read N- to C-terminus: Fructose-1,6-bisphosphatase class 1 (337 aa).

Positions 94, 116, 118, and 119 each coordinate Mg(2+). Residues Asp119 to Ser122, Asn210, and Lys276 each bind substrate. Glu282 contributes to the Mg(2+) binding site.

The protein belongs to the FBPase class 1 family. As to quaternary structure, homotetramer. It depends on Mg(2+) as a cofactor.

The protein localises to the cytoplasm. The enzyme catalyses beta-D-fructose 1,6-bisphosphate + H2O = beta-D-fructose 6-phosphate + phosphate. The protein operates within carbohydrate biosynthesis; gluconeogenesis. The chain is Fructose-1,6-bisphosphatase class 1 from Burkholderia orbicola (strain MC0-3).